The chain runs to 253 residues: Salivary gland SP38-40.B protein (253 aa).

The N-terminal stretch at 1–21 is a signal peptide; sequence MRIKFLVVLAVICLLAHYASA. Disordered stretches follow at residues 23–51, 140–168, and 203–253; these read GMGGDKKPKDAPKPKDAPKPKEVKPVKAD, KDEKKEKKVVKVIKPPKEKPPKKPRKECS, and VQGK…DAKK. Basic and acidic residues-rich tracts occupy residues 26–51 and 154–168; these read GDKKPKDAPKPKDAPKPKEVKPVKAD and PPKEKPPKKPRKECS. 2 repeat units span residues 29–34 and 35–40. Positions 29–47 are 3 X 6 AA approximate tandem repeats of K-P-K-D-A-P; sequence KPKDAPKPKDAPKPKEVKP. Residues 41 to 47 form a 1-3; approximate repeat; that stretch reads KPKEVKP. A run of 2 repeats spans residues 153-156 and 158-161. The tract at residues 153-166 is 3 X 4 AA approximate tandem repeats of K-P-P-K; sequence KPPKEKPPKKPRKE. The 2-3; approximate repeat unit spans residues 162-166; sequence KPRKE. Over residues 206-217 the composition is skewed to basic residues; it reads KQKKGAKKAKGG. 6 consecutive repeat copies span residues 222-225, 226-229, 230-233, 234-237, 238-241, and 242-245. The interval 222–249 is 7 X 4 AA approximate tandem repeats of P-K-P-[GAV]; the sequence is PKPGPKPAPKPGPKPAPKPVPKPADKPK. Pro residues predominate over residues 225–243; that stretch reads GPKPAPKPGPKPAPKPVPK. Positions 244-253 are enriched in basic and acidic residues; the sequence is PADKPKDAKK. The stretch at 246–249 is one 3-7; approximate repeat; it reads DKPK.

Salivary gland.

Its subcellular location is the secreted. Functionally, used by the larvae to construct a supramolecular structure, the larval tube. This chain is Salivary gland SP38-40.B protein (SP38-40.B), found in Chironomus tentans (Midge).